The following is an 839-amino-acid chain: DNA-directed RNA polymerase YonO (839 aa).

3 residues coordinate Mg(2+): Asp535, Asp537, and Asp539.

The protein belongs to the YRH RNA polymerase family. A divalent metal cation is required as a cofactor.

It carries out the reaction RNA(n) + a ribonucleoside 5'-triphosphate = RNA(n+1) + diphosphate. Functionally, a single subunit DNA-dependent RNA polymerase (RNAP) that catalyzes the transcription of DNA into RNA using the four ribonucleoside triphosphates (rNTPs) as substrates. The enzyme is more highly processive than the multisubunit RNAP from E.coli but is considerably more error-prone. It has no detectable proof-reading function but can perform pyrophosphorolysis. Probably transcribes the late genes of the SPbeta phage starting from yonK. This Bacillus pumilus (Bacillus mesentericus) protein is DNA-directed RNA polymerase YonO (yonO).